The chain runs to 141 residues: Large ribosomal subunit protein uL11c (141 aa).

It belongs to the universal ribosomal protein uL11 family. In terms of assembly, part of the ribosomal stalk of the 50S ribosomal subunit. Interacts with L10 and the large rRNA to form the base of the stalk. L10 forms an elongated spine to which L12 dimers bind in a sequential fashion forming a multimeric L10(L12)X complex.

The protein resides in the plastid. The protein localises to the cyanelle. Functionally, forms part of the ribosomal stalk which helps the ribosome interact with GTP-bound translation factors. This chain is Large ribosomal subunit protein uL11c, found in Cyanophora paradoxa.